The chain runs to 475 residues: MRFQPVIGLEVHVQLKTDSKIFCGCSTRFGAEPNLNTCPVCLALPGALPVLNQKVVEFAIMAGLATNCSISPTNIFARKNYFYPDLPKGYQISQFDLPICLAGHLDIAVGDQTKRIGITRIHMEEDAGKLVHGQGGGSGVDLNRAGTPLLEVVSEPDMRTADEAVAYLKKLYQIVTYLGICDGNMEEGSFRCDANVSVMPVGSGTFGTRAEIKNVNSFKFVKAAIEYEIARQCELIEDGGKVVQETRLFDPNKGVTRSMRGKEEAHDYRYFPDPDLVPVVISDDWIKRVKNELPELPEVKFNRFLTEYSLPEYDADVLTSSRPLADYFEQCAQTCNNAKAAANWVMGELTRSLNDNGIAIEDSPVSPAQLAGLIKLIDGGTISGTIAKKVFEDLWKNGGEAAAIVEQQGLAQVSDTGAIETAIDQIMAANMGQVEEYRGGKDKVFGFFVGQVMKAMKGKANPAVVNDLLKQKLAG.

The protein belongs to the GatB/GatE family. GatB subfamily. In terms of assembly, heterotrimer of A, B and C subunits.

The enzyme catalyses L-glutamyl-tRNA(Gln) + L-glutamine + ATP + H2O = L-glutaminyl-tRNA(Gln) + L-glutamate + ADP + phosphate + H(+). It carries out the reaction L-aspartyl-tRNA(Asn) + L-glutamine + ATP + H2O = L-asparaginyl-tRNA(Asn) + L-glutamate + ADP + phosphate + 2 H(+). Allows the formation of correctly charged Asn-tRNA(Asn) or Gln-tRNA(Gln) through the transamidation of misacylated Asp-tRNA(Asn) or Glu-tRNA(Gln) in organisms which lack either or both of asparaginyl-tRNA or glutaminyl-tRNA synthetases. The reaction takes place in the presence of glutamine and ATP through an activated phospho-Asp-tRNA(Asn) or phospho-Glu-tRNA(Gln). The protein is Aspartyl/glutamyl-tRNA(Asn/Gln) amidotransferase subunit B of Trichlorobacter lovleyi (strain ATCC BAA-1151 / DSM 17278 / SZ) (Geobacter lovleyi).